A 208-amino-acid polypeptide reads, in one-letter code: Guanylate kinase (208 aa).

Residues 4-185 (GNLYIISAPS…ALVDLEHILR (182 aa)) enclose the Guanylate kinase-like domain. 11–18 (APSGAGKS) is a binding site for ATP.

This sequence belongs to the guanylate kinase family.

It is found in the cytoplasm. It catalyses the reaction GMP + ATP = GDP + ADP. Its function is as follows. Essential for recycling GMP and indirectly, cGMP. The polypeptide is Guanylate kinase (Histophilus somni (strain 129Pt) (Haemophilus somnus)).